The sequence spans 1156 residues: Condensin-2 complex subunit G2 (1156 aa).

The stretch at 460–498 (MLPALKFCLHDNSEKVRVAFVDMLLKIKAVRAAKFWKIC) is one HEAT repeat. The tract at residues 587–611 (PNEDTEDEDDDEGDGEGIVRGDSEK) is disordered. The segment covering 589–601 (EDTEDEDDDEGDG) has biased composition (acidic residues).

In terms of assembly, component of the condensin-2 complex, which contains the smc2 and smc4 heterodimer, and three non SMC subunits that probably regulate the complex: ncaph2, ncapd3 and ncapg2.

The protein localises to the nucleus. Functionally, regulatory subunit of the condensin-2 complex, a complex which establishes mitotic chromosome architecture and is involved in physical rigidity of the chromatid axis. The protein is Condensin-2 complex subunit G2 (ncapg2) of Xenopus laevis (African clawed frog).